An 88-amino-acid polypeptide reads, in one-letter code: Putative membrane protein insertion efficiency factor (88 aa).

The protein belongs to the UPF0161 family.

It is found in the cell inner membrane. Its function is as follows. Could be involved in insertion of integral membrane proteins into the membrane. In Koribacter versatilis (strain Ellin345), this protein is Putative membrane protein insertion efficiency factor.